The following is a 158-amino-acid chain: 2-C-methyl-D-erythritol 2,4-cyclodiphosphate synthase (158 aa).

Residues Asp-8 and His-10 each coordinate a divalent metal cation. Residues 8-10 (DVH) and 34-35 (HS) contribute to the 4-CDP-2-C-methyl-D-erythritol 2-phosphate site. Residue His-42 participates in a divalent metal cation binding. 4-CDP-2-C-methyl-D-erythritol 2-phosphate contacts are provided by residues 56-58 (DIG), 61-65 (FPDTD), 100-106 (AQKPKML), 132-135 (TTEE), and Phe-139.

It belongs to the IspF family. In terms of assembly, homotrimer. The cofactor is a divalent metal cation.

It carries out the reaction 4-CDP-2-C-methyl-D-erythritol 2-phosphate = 2-C-methyl-D-erythritol 2,4-cyclic diphosphate + CMP. It participates in isoprenoid biosynthesis; isopentenyl diphosphate biosynthesis via DXP pathway; isopentenyl diphosphate from 1-deoxy-D-xylulose 5-phosphate: step 4/6. Involved in the biosynthesis of isopentenyl diphosphate (IPP) and dimethylallyl diphosphate (DMAPP), two major building blocks of isoprenoid compounds. Catalyzes the conversion of 4-diphosphocytidyl-2-C-methyl-D-erythritol 2-phosphate (CDP-ME2P) to 2-C-methyl-D-erythritol 2,4-cyclodiphosphate (ME-CPP) with a corresponding release of cytidine 5-monophosphate (CMP). This is 2-C-methyl-D-erythritol 2,4-cyclodiphosphate synthase from Clostridium beijerinckii (strain ATCC 51743 / NCIMB 8052) (Clostridium acetobutylicum).